We begin with the raw amino-acid sequence, 325 residues long: Olfactory receptor 1S2 (325 aa).

Topologically, residues 1 to 38 are extracellular; that stretch reads MKTLCSFLQISRNMHQENQTTITEFILLGLSNQAEHQN. N-linked (GlcNAc...) asparagine glycosylation occurs at Asn-18. A helical membrane pass occupies residues 39–62; the sequence is LLFVLFLSMYVVTVVGNGLIIVAI. The Cytoplasmic portion of the chain corresponds to 63–70; the sequence is SLDIYLHT. Residues 71-92 form a helical membrane-spanning segment; the sequence is PMYLFLAYLSFADISSISNSVP. Residues 93–113 are Extracellular-facing; sequence KMLVNIQTNSQSISYESCITQ. A disulfide bridge links Cys-110 with Cys-202. The chain crosses the membrane as a helical span at residues 114–133; sequence MYFSIVFVVTDNLLLGTMAF. The Cytoplasmic portion of the chain corresponds to 134–152; that stretch reads DHFVAICHPLNYTTFMRAR. Residues 153–171 form a helical membrane-spanning segment; the sequence is FGTLLTVISWFLSNIIALT. The Extracellular portion of the chain corresponds to 172-208; the sequence is HTLLLIQLLFCDHNTLPHFFCDLAPLLKLSCSDTMIN. A helical transmembrane segment spans residues 209-232; that stretch reads ELVLFIVGLSVIIFPFVLIFFSYV. Residues 233-249 lie on the Cytoplasmic side of the membrane; that stretch reads CIIRAVLGVSSTQGKWK. The helical transmembrane segment at 250–272 threads the bilayer; the sequence is AFSTCGSHLTIALLFYGTTVGVY. Residues 273-285 are Extracellular-facing; it reads FFPSSTHPEDTDK. The chain crosses the membrane as a helical span at residues 286 to 305; sequence IGAVLFTVVTPMMNPFIYSL. Residues 306–325 are Cytoplasmic-facing; sequence RNKDMKGALRKLINRKISSL.

Belongs to the G-protein coupled receptor 1 family.

It localises to the cell membrane. Functionally, odorant receptor. This chain is Olfactory receptor 1S2 (OR1S2), found in Homo sapiens (Human).